The following is a 239-amino-acid chain: Ribosomal RNA small subunit methyltransferase G (239 aa).

S-adenosyl-L-methionine contacts are provided by residues Gly79, Phe84, 130–131 (AE), and Arg149. A compositionally biased stretch (basic residues) spans 218–227 (KHKKTPKKYP). Residues 218-239 (KHKKTPKKYPRQAGTPNKKPIA) form a disordered region.

This sequence belongs to the methyltransferase superfamily. RNA methyltransferase RsmG family.

Its subcellular location is the cytoplasm. Its function is as follows. Specifically methylates the N7 position of a guanine in 16S rRNA. The sequence is that of Ribosomal RNA small subunit methyltransferase G from Leuconostoc citreum (strain KM20).